Here is a 280-residue protein sequence, read N- to C-terminus: MFLLGSGGKHFEDELRNAGAKILEVEIKRFPDGEKYVRVMGNGDEATVVSSTFYPQDEKIVELLLLGDALREKGFEKLKLVVPYFAYSRQDRVTKDGEPISVRAVMRALGIYYEELYIFDTHNPETLRFFPGKAVNVSPARVIGEYFREKLGDGLVLAPDKGALERARAVAEVLGLEYSHFEKRRISPTEVEMHPVDVDVKGKNVLIVDDIISTGGTMVRAAELLRKLGAKKIYVSATHGVFAEGAIERVSRAVDELAVTNTIPTPVSRISIVPELLKLE.

Residues 32 to 34 (DGE) and 89 to 90 (RQ) each bind ATP. Residues H122 and D160 each coordinate Mg(2+). K183 is a catalytic residue. D-ribose 5-phosphate is bound by residues R185, D209, and 213–217 (STGGT).

Belongs to the ribose-phosphate pyrophosphokinase family. Class III (archaeal) subfamily. The cofactor is Mg(2+).

The protein resides in the cytoplasm. The enzyme catalyses D-ribose 5-phosphate + ATP = 5-phospho-alpha-D-ribose 1-diphosphate + AMP + H(+). It functions in the pathway metabolic intermediate biosynthesis; 5-phospho-alpha-D-ribose 1-diphosphate biosynthesis; 5-phospho-alpha-D-ribose 1-diphosphate from D-ribose 5-phosphate (route I): step 1/1. Its activity is regulated as follows. Activated by Co(2+) and Ni(2+) ions, however Mg(2+) ion shows almost no significant effect on the activity. Equally inhibited by ADP, CTP and GTP, while dTTP and UTP are less inhibitory. In terms of biological role, involved in the biosynthesis of the central metabolite phospho-alpha-D-ribosyl-1-pyrophosphate (PRPP) via the transfer of pyrophosphoryl group from ATP to 1-hydroxyl of ribose-5-phosphate (Rib-5-P). It can also use CTP and GTP as substrates in addition to ATP. This Thermococcus kodakarensis (strain ATCC BAA-918 / JCM 12380 / KOD1) (Pyrococcus kodakaraensis (strain KOD1)) protein is Ribose-phosphate pyrophosphokinase.